Consider the following 223-residue polypeptide: MKTIQIAIDGPASSGKSTVAKIIAKDFGFTYLDTGAMYRAATYMALKNQLGVEEVEALLALLDQHPISFGRSETGDQLVFVGDVDITHPIRENEVTNHVSAIAAIPQVREKLVSLQQEIAQQGGIVMDGRDIGTVVLPQAELKIFLVASVDERAERRYKENIAKGIETDLETLKKEIAARDYKDSHRETSPLKQAEDAVYLDTTGLNIQEVVEKIKAEAEKRM.

An ATP-binding site is contributed by 10 to 18 (GPASSGKST).

This sequence belongs to the cytidylate kinase family. Type 1 subfamily.

The protein resides in the cytoplasm. It catalyses the reaction CMP + ATP = CDP + ADP. It carries out the reaction dCMP + ATP = dCDP + ADP. The polypeptide is Cytidylate kinase (Streptococcus pneumoniae serotype 4 (strain ATCC BAA-334 / TIGR4)).